A 110-amino-acid chain; its full sequence is Putative zinc finger protein ORF110 (110 aa).

A C2H2-type zinc finger spans residues 3-26; it reads YVCTACKLKFHTFEEFKIHVHLFH.

The protein is Putative zinc finger protein ORF110 of Acidianus filamentous virus 1 (isolate United States/Yellowstone) (AFV-1).